A 340-amino-acid chain; its full sequence is DNA primase large subunit PriL (340 aa).

Residues C229, C301, C310, and C318 each coordinate [4Fe-4S] cluster.

Belongs to the eukaryotic-type primase large subunit family. In terms of assembly, heterodimer of a small subunit (PriS) and a large subunit (PriL). The cofactor is [4Fe-4S] cluster.

In terms of biological role, regulatory subunit of DNA primase, an RNA polymerase that catalyzes the synthesis of short RNA molecules used as primers for DNA polymerase during DNA replication. Stabilizes and modulates the activity of the small subunit, increasing the rate of DNA synthesis, and conferring RNA synthesis capability. The DNA polymerase activity may enable DNA primase to also catalyze primer extension after primer synthesis. May also play a role in DNA repair. The protein is DNA primase large subunit PriL of Thermoplasma acidophilum (strain ATCC 25905 / DSM 1728 / JCM 9062 / NBRC 15155 / AMRC-C165).